We begin with the raw amino-acid sequence, 340 residues long: DNA-directed RNA polymerase subunit alpha (340 aa).

Positions 1 to 236 are alpha N-terminal domain (alpha-NTD); sequence MLSLSKNWNT…EQLQLFISFE (236 aa). Residues 251–340 are alpha C-terminal domain (alpha-CTD); it reads FSPYLLKRVD…LSKRYEDSYN (90 aa).

This sequence belongs to the RNA polymerase alpha chain family. Homodimer. The RNAP catalytic core consists of 2 alpha, 1 beta, 1 beta' and 1 omega subunit. When a sigma factor is associated with the core the holoenzyme is formed, which can initiate transcription.

The enzyme catalyses RNA(n) + a ribonucleoside 5'-triphosphate = RNA(n+1) + diphosphate. In terms of biological role, DNA-dependent RNA polymerase catalyzes the transcription of DNA into RNA using the four ribonucleoside triphosphates as substrates. The chain is DNA-directed RNA polymerase subunit alpha from Rickettsia akari (strain Hartford).